Consider the following 215-residue polypeptide: MADSSPAPSLRAGGPREPRPSAPSPPPPHSRLGSEAEEAELSLSLARTKTRSYGSTASVRAPLGAGVIERHVEHRVRAGDTLQGIALKYGVSMEQIKRANKLFTNDCIFLKKTLNIPVISEKPLLFNGLNSVDSPENETVDSFSHEEELVAAGEDVSPLSPQELDVQPMQPEEVSARDFLQRLDLQIKLSTQAAKKLKGESRDEEGLYTASLYHS.

Positions 1 to 40 are disordered; sequence MADSSPAPSLRAGGPREPRPSAPSPPPPHSRLGSEAEEAE. N-acetylalanine is present on Ala2. A phosphoserine mark is found at Ser5, Ser24, Ser34, and Ser58. Residues 20–29 are compositionally biased toward pro residues; it reads PSAPSPPPPH. The 45-residue stretch at 72-116 folds into the LysM domain; it reads VEHRVRAGDTLQGIALKYGVSMEQIKRANKLFTNDCIFLKKTLNI. Residues 194 to 215 are disordered; sequence AKKLKGESRDEEGLYTASLYHS.

In Bos taurus (Bovine), this protein is LysM and putative peptidoglycan-binding domain-containing protein 2 (LYSMD2).